Reading from the N-terminus, the 248-residue chain is Triosephosphate isomerase (248 aa).

Substrate contacts are provided by asparagine 10 and lysine 12. The Electrophile role is filled by histidine 95. Glutamate 165 functions as the Proton acceptor in the catalytic mechanism.

It belongs to the triosephosphate isomerase family. As to quaternary structure, homodimer.

It carries out the reaction D-glyceraldehyde 3-phosphate = dihydroxyacetone phosphate. Its pathway is carbohydrate biosynthesis; gluconeogenesis. It participates in carbohydrate degradation; glycolysis; D-glyceraldehyde 3-phosphate from glycerone phosphate: step 1/1. This Neurospora crassa (strain ATCC 24698 / 74-OR23-1A / CBS 708.71 / DSM 1257 / FGSC 987) protein is Triosephosphate isomerase (tpi-1).